The following is a 751-amino-acid chain: Photosystem I P700 chlorophyll a apoprotein A1 (751 aa).

A run of 8 helical transmembrane segments spans residues 73–96 (IFSA…FHGA), 159–182 (LYST…FHYH), 198–222 (MNHH…HVSL), 294–312 (TAHH…GHMY), 349–372 (WHAQ…HHMY), 388–414 (LSLF…IFMV), 436–458 (AIIS…LYIH), and 533–551 (FLVH…LILL). 2 residues coordinate [4Fe-4S] cluster: C575 and C584. 2 helical membrane-spanning segments follow: residues 591 to 612 (HVFL…HFSW) and 665 to 687 (LSAY…MFLF). H676 contributes to the chlorophyll a' binding site. The chlorophyll a site is built by M684 and Y692. W693 provides a ligand contact to phylloquinone. Residues 725 to 745 (AVGVAHYLLGGIATTWAFFLA) form a helical membrane-spanning segment.

The protein belongs to the PsaA/PsaB family. In terms of assembly, the PsaA/B heterodimer binds the P700 chlorophyll special pair and subsequent electron acceptors. PSI consists of a core antenna complex that captures photons, and an electron transfer chain that converts photonic excitation into a charge separation. The eukaryotic PSI reaction center is composed of at least 11 subunits. P700 is a chlorophyll a/chlorophyll a' dimer, A0 is one or more chlorophyll a, A1 is one or both phylloquinones and FX is a shared 4Fe-4S iron-sulfur center. is required as a cofactor.

Its subcellular location is the plastid. It localises to the chloroplast thylakoid membrane. The catalysed reaction is reduced [plastocyanin] + hnu + oxidized [2Fe-2S]-[ferredoxin] = oxidized [plastocyanin] + reduced [2Fe-2S]-[ferredoxin]. Its function is as follows. PsaA and PsaB bind P700, the primary electron donor of photosystem I (PSI), as well as the electron acceptors A0, A1 and FX. PSI is a plastocyanin/cytochrome c6-ferredoxin oxidoreductase, converting photonic excitation into a charge separation, which transfers an electron from the donor P700 chlorophyll pair to the spectroscopically characterized acceptors A0, A1, FX, FA and FB in turn. Oxidized P700 is reduced on the lumenal side of the thylakoid membrane by plastocyanin or cytochrome c6. This Nephroselmis olivacea (Green alga) protein is Photosystem I P700 chlorophyll a apoprotein A1.